A 124-amino-acid polypeptide reads, in one-letter code: Putative B3 domain-containing protein At1g51970 (124 aa).

Positions 18–124 (VLKKNLTESD…SRRFLFHHIN (107 aa)) form a DNA-binding region, TF-B3.

The protein localises to the nucleus. The chain is Putative B3 domain-containing protein At1g51970 from Arabidopsis thaliana (Mouse-ear cress).